A 402-amino-acid chain; its full sequence is Serine/threonine transporter SstT (402 aa).

8 consecutive transmembrane segments (helical) span residues 17–37 (IAIGVVIGAILGLLIPKITVI), 44–64 (FVGGLKAIAPLLVSALVANAL), 79–99 (IVLYLFGTFAAALTAVISHYI), 138–158 (ALSQANYIGVLVWAVVFGFAM), 179–199 (IVRWIINLAPFGILGLVFDTI), 212–232 (VLILVLVGTMTFVALVINPII), 295–315 (MAGAAVTINVLTLAAVTTLGI), and 336–356 (ASGIAGGSLLLVPVACSLFGI).

Belongs to the dicarboxylate/amino acid:cation symporter (DAACS) (TC 2.A.23) family.

The protein localises to the cell membrane. It carries out the reaction L-serine(in) + Na(+)(in) = L-serine(out) + Na(+)(out). It catalyses the reaction L-threonine(in) + Na(+)(in) = L-threonine(out) + Na(+)(out). Involved in the import of serine and threonine into the cell, with the concomitant import of sodium (symport system). This is Serine/threonine transporter SstT from Streptococcus thermophilus (strain ATCC BAA-491 / LMD-9).